Here is a 459-residue protein sequence, read N- to C-terminus: Cysteine--tRNA ligase (459 aa).

Cysteine 28 contacts Zn(2+). Positions 30-40 (VTIYDLCHIGH) match the 'HIGH' region motif. Zn(2+)-binding residues include cysteine 209, histidine 234, and glutamate 238. Residues 266-270 (KMSKS) carry the 'KMSKS' region motif. Lysine 269 provides a ligand contact to ATP.

Belongs to the class-I aminoacyl-tRNA synthetase family. As to quaternary structure, monomer. Zn(2+) is required as a cofactor.

It localises to the cytoplasm. The enzyme catalyses tRNA(Cys) + L-cysteine + ATP = L-cysteinyl-tRNA(Cys) + AMP + diphosphate. This chain is Cysteine--tRNA ligase, found in Shewanella piezotolerans (strain WP3 / JCM 13877).